The primary structure comprises 268 residues: Putative carbamate hydrolase RutD (268 aa).

Positions 15–119 constitute an AB hydrolase-1 domain; that stretch reads PVMVMIAGLG…VIVNGWLSLS (105 aa).

It belongs to the AB hydrolase superfamily. Hydrolase RutD family.

The catalysed reaction is carbamate + 2 H(+) = NH4(+) + CO2. Involved in pyrimidine catabolism. May facilitate the hydrolysis of carbamate, a reaction that can also occur spontaneously. The sequence is that of Putative carbamate hydrolase RutD from Cronobacter sakazakii (strain ATCC BAA-894) (Enterobacter sakazakii).